The sequence spans 350 residues: tRNA uridine(34) hydroxylase (350 aa).

The region spanning 146–240 (DDPDALFIDM…YARKAREQGL (95 aa)) is the Rhodanese domain. Catalysis depends on C200, which acts as the Cysteine persulfide intermediate.

The protein belongs to the TrhO family.

It catalyses the reaction uridine(34) in tRNA + AH2 + O2 = 5-hydroxyuridine(34) in tRNA + A + H2O. Functionally, catalyzes oxygen-dependent 5-hydroxyuridine (ho5U) modification at position 34 in tRNAs, the first step in 5-carboxymethoxyuridine (cmo5U) biosynthesis. May be part of an alternate pathway, which is able to bypass cmo5U biogenesis in a subset of tRNAs under aerobic conditions. The polypeptide is tRNA uridine(34) hydroxylase (Escherichia coli O157:H7).